Here is a 265-residue protein sequence, read N- to C-terminus: Mlc titration factor A (265 aa).

Positions 111, 148, 152, and 211 each coordinate Zn(2+).

It belongs to the MtfA family. Interacts with Mlc. It depends on Zn(2+) as a cofactor.

It localises to the cytoplasm. In terms of biological role, involved in the modulation of the activity of the glucose-phosphotransferase system (glucose-PTS). Interacts with the transcriptional repressor Mlc, preventing its interaction with DNA and leading to the modulation of expression of genes regulated by Mlc, including ptsG, which encodes the PTS system glucose-specific EIICB component. Functionally, shows zinc-dependent metallopeptidase activity. This chain is Mlc titration factor A, found in Shigella dysenteriae serotype 1 (strain Sd197).